We begin with the raw amino-acid sequence, 361 residues long: WAT1-related protein At4g01450 (361 aa).

10 helical membrane-spanning segments follow: residues 8 to 28 (WAPM…NALV), 40 to 60 (VIAT…AYFW), 76 to 96 (LFVS…LGLS), 103 to 123 (GSAF…IFGF), 132 to 152 (IGYG…LLTM), 177 to 197 (WIKG…WMLI), 209 to 229 (YSST…LSLI), 243 to 263 (LTII…TVGM), 273 to 293 (VVSS…DFLI), and 298 to 318 (IYLG…IFLW). EamA domains lie at 21-142 (AGMV…GTLI) and 194-317 (WMLI…YIFL).

The protein belongs to the drug/metabolite transporter (DMT) superfamily. Plant drug/metabolite exporter (P-DME) (TC 2.A.7.4) family.

Its subcellular location is the membrane. This Arabidopsis thaliana (Mouse-ear cress) protein is WAT1-related protein At4g01450.